The primary structure comprises 293 residues: Cytidine deaminase 8 (293 aa).

2 CMP/dCMP-type deaminase domains span residues 20-151 (FTPQ…LISQ) and 181-293 (EHCN…LHCK). 61–63 (NVE) provides a ligand contact to substrate. Residue His74 participates in Zn(2+) binding. Glu76 functions as the Proton donor in the catalytic mechanism. Zn(2+)-binding residues include Cys107 and Cys110.

The protein belongs to the cytidine and deoxycytidylate deaminase family. In terms of assembly, homodimer. Requires Zn(2+) as cofactor.

It catalyses the reaction cytidine + H2O + H(+) = uridine + NH4(+). It carries out the reaction 2'-deoxycytidine + H2O + H(+) = 2'-deoxyuridine + NH4(+). In terms of biological role, this enzyme scavenges exogenous and endogenous cytidine and 2'-deoxycytidine for UMP synthesis. This Arabidopsis thaliana (Mouse-ear cress) protein is Cytidine deaminase 8 (CDA8).